A 93-amino-acid chain; its full sequence is Ribonuclease P protein component 4 (93 aa).

Residues C55, C58, C81, and C83 each contribute to the Zn(2+) site.

This sequence belongs to the eukaryotic/archaeal RNase P protein component 4 family. In terms of assembly, consists of a catalytic RNA component and at least 4-5 protein subunits. Zn(2+) is required as a cofactor.

Its subcellular location is the cytoplasm. It carries out the reaction Endonucleolytic cleavage of RNA, removing 5'-extranucleotides from tRNA precursor.. Functionally, part of ribonuclease P, a protein complex that generates mature tRNA molecules by cleaving their 5'-ends. This chain is Ribonuclease P protein component 4, found in Halobacterium salinarum (strain ATCC 29341 / DSM 671 / R1).